A 493-amino-acid polypeptide reads, in one-letter code: 6-aminohexanoate-cyclic-dimer hydrolase (493 aa).

Catalysis depends on charge relay system residues lysine 72 and serine 150. Catalysis depends on serine 174, which acts as the Acyl-ester intermediate.

This sequence belongs to the amidase family. Homodimer.

It catalyses the reaction 1,8-diazacyclotetradecane-2,9-dione + H2O = N-(6-aminohexanoyl)-6-aminohexanoate. Its pathway is xenobiotic degradation; nylon-6 oligomer degradation. With respect to regulation, strongly inhibited by 1 uM diisopropylphosphofluoridate and 10 uM p-chloromercuribenzoate but scarcely inhibited by 100 mM EDTA in vitro. Its function is as follows. Specifically catalyzes the hydrolysis of 6-aminohexanoic acid cyclic dimer (1,8-diazacyclotetradecane-2,9-dione) to form the linear dimer 6-aminohexanoyl-6-aminohexanoic acid. Is inactive on 6-aminohexanoic acid oligomers (degree of polymerization 2 to 6), various other cyclic amides, cyclic diamides, linear amides, oligopeptides, and casein. Allows the bacterium to grow on a medium containing 6-aminohexanoic acid cyclic dimer as the sole carbon and nitrogen sources. In Paenarthrobacter ureafaciens, this protein is 6-aminohexanoate-cyclic-dimer hydrolase (nylA).